The sequence spans 675 residues: UvrABC system protein B (675 aa).

Residues 32–417 (EGLSDGLAYQ…EHAGQVVEQV (386 aa)) enclose the Helicase ATP-binding domain. 45–52 (GVTGSGKT) is a binding site for ATP. The short motif at 98–121 (YYDYYQPEAYVPSRDLFIEKDSAI) is the Beta-hairpin element. The Helicase C-terminal domain occupies 436–602 (QVDDLMSEIN…QIKKQVKDII (167 aa)). The 36-residue stretch at 634–669 (IKEIAKLEKAMQQAARDLQFEEAAVLRDRISNIKEN) folds into the UVR domain.

This sequence belongs to the UvrB family. As to quaternary structure, forms a heterotetramer with UvrA during the search for lesions. Interacts with UvrC in an incision complex.

The protein resides in the cytoplasm. The UvrABC repair system catalyzes the recognition and processing of DNA lesions. A damage recognition complex composed of 2 UvrA and 2 UvrB subunits scans DNA for abnormalities. Upon binding of the UvrA(2)B(2) complex to a putative damaged site, the DNA wraps around one UvrB monomer. DNA wrap is dependent on ATP binding by UvrB and probably causes local melting of the DNA helix, facilitating insertion of UvrB beta-hairpin between the DNA strands. Then UvrB probes one DNA strand for the presence of a lesion. If a lesion is found the UvrA subunits dissociate and the UvrB-DNA preincision complex is formed. This complex is subsequently bound by UvrC and the second UvrB is released. If no lesion is found, the DNA wraps around the other UvrB subunit that will check the other stand for damage. The sequence is that of UvrABC system protein B from Neisseria gonorrhoeae (strain ATCC 700825 / FA 1090).